A 130-amino-acid polypeptide reads, in one-letter code: UPF0102 protein RPA0323 (130 aa).

It belongs to the UPF0102 family.

The protein is UPF0102 protein RPA0323 of Rhodopseudomonas palustris (strain ATCC BAA-98 / CGA009).